We begin with the raw amino-acid sequence, 82 residues long: Small ribosomal subunit protein uS17 (82 aa).

This sequence belongs to the universal ribosomal protein uS17 family. In terms of assembly, part of the 30S ribosomal subunit.

Functionally, one of the primary rRNA binding proteins, it binds specifically to the 5'-end of 16S ribosomal RNA. The protein is Small ribosomal subunit protein uS17 of Shewanella frigidimarina (strain NCIMB 400).